The sequence spans 37 residues: Large ribosomal subunit protein bL36 (37 aa).

This sequence belongs to the bacterial ribosomal protein bL36 family.

The sequence is that of Large ribosomal subunit protein bL36 from Nitrosococcus oceani (strain ATCC 19707 / BCRC 17464 / JCM 30415 / NCIMB 11848 / C-107).